We begin with the raw amino-acid sequence, 344 residues long: tRNA N6-adenosine threonylcarbamoyltransferase (344 aa).

H114 and H118 together coordinate Fe cation. Substrate contacts are provided by residues 136–140 (LVSGG), D170, G183, D187, and N278. D306 provides a ligand contact to Fe cation. The disordered stretch occupies residues 325 to 344 (PSPLDVPSDPGLPVMQGQVR).

This sequence belongs to the KAE1 / TsaD family. Requires Fe(2+) as cofactor.

It localises to the cytoplasm. It carries out the reaction L-threonylcarbamoyladenylate + adenosine(37) in tRNA = N(6)-L-threonylcarbamoyladenosine(37) in tRNA + AMP + H(+). In terms of biological role, required for the formation of a threonylcarbamoyl group on adenosine at position 37 (t(6)A37) in tRNAs that read codons beginning with adenine. Is involved in the transfer of the threonylcarbamoyl moiety of threonylcarbamoyl-AMP (TC-AMP) to the N6 group of A37, together with TsaE and TsaB. TsaD likely plays a direct catalytic role in this reaction. The chain is tRNA N6-adenosine threonylcarbamoyltransferase from Mycobacterium tuberculosis (strain ATCC 25177 / H37Ra).